The chain runs to 177 residues: Large ribosomal subunit protein uL6 (177 aa).

This sequence belongs to the universal ribosomal protein uL6 family. As to quaternary structure, part of the 50S ribosomal subunit.

Its function is as follows. This protein binds to the 23S rRNA, and is important in its secondary structure. It is located near the subunit interface in the base of the L7/L12 stalk, and near the tRNA binding site of the peptidyltransferase center. The protein is Large ribosomal subunit protein uL6 of Pseudomonas fluorescens (strain ATCC BAA-477 / NRRL B-23932 / Pf-5).